Consider the following 154-residue polypeptide: Cyanate hydratase (154 aa).

Active-site residues include Arg-100, Glu-103, and Ser-126.

This sequence belongs to the cyanase family.

The catalysed reaction is cyanate + hydrogencarbonate + 3 H(+) = NH4(+) + 2 CO2. Its function is as follows. Catalyzes the reaction of cyanate with bicarbonate to produce ammonia and carbon dioxide. This Aspergillus fumigatus (strain ATCC MYA-4609 / CBS 101355 / FGSC A1100 / Af293) (Neosartorya fumigata) protein is Cyanate hydratase.